Here is a 105-residue protein sequence, read N- to C-terminus: U2-lycotoxin-Ls1a (105 aa).

The signal sequence occupies residues 1-17 (MIKYVLISALLVVAVYS). Residues 18–41 (FTIEDNEDALLEEAEDELDTEEER) constitute a propeptide that is removed on maturation. Intrachain disulfides connect Cys51–Cys67, Cys58–Cys97, Cys60–Cys83, and Cys69–Cys81.

Belongs to the neurotoxin 04 (omega-agtx) family. 01 (type I omega-agtx) subfamily. Expressed by the venom gland.

It is found in the secreted. Functionally, insecticidal to house crickets. It induces an excitatory slow-onset impact that leads to irreversible spastic paralysis. It also modifies human voltage-gated potassium channel Kv1.5/KCNA5. Most likely, it binds to the voltage-sensing domain of the channel, suggesting it does not block the pore but prevents its opening at physiological membrane potentials. The recombinant peptide binds to the channel in an irreversible manner and slows down the hKv1.5 current activation kinetics. It is not toxic to mice, when intracranially injected (at 0.5 ug/g mouse). The polypeptide is U2-lycotoxin-Ls1a (Lycosa singoriensis (Wolf spider)).